A 432-amino-acid chain; its full sequence is MAISGFKGTLKLKPLKTPVFYKRDKDFRGYFSGHLQHKETKLSPAQLEAFRNAYNFFTKDRTGCIDSHGLMSTVAKLGMNLNAYDIYNELKCADRDRDGKINFSDFIDVLTDKKLFLKAVVPEKRICLDLANNPGILLFEILSKFVEISALHRKDIIELVSYFRKKFQESNSEILWSPYGRRAFKTDICSPPRSSTAAFANSARISIMKERDLYKFLEALKRCNLRTDSPYSKIPVFPLFPDVDGVVLGKPFKDTQKLEMLRKREPLSFFEDYFFNKRDWKTQAMNVKPLKSASGYSDDILAIDQLFKKKQHWTVSDAVALKQHVKRATDTYHLGIALDHRKEMLNLWKKIRGDLVGLESNNESFYNTFSTYTWSWNVCQELLSAKDLRLHDANVNKTSPSNSGLSSPSDLSESDPETGRKRKRKSSRGFRQ.

2 consecutive EF-hand domains span residues 45–80 and 81–116; these read AQLE…LGMN and LNAY…KKLF. Ca(2+)-binding residues include Asp94, Asp96, Asp98, Lys100, and Asp105. Residue Tyr273 is modified to Phosphotyrosine. The disordered stretch occupies residues 394–432; that stretch reads NVNKTSPSNSGLSSPSDLSESDPETGRKRKRKSSRGFRQ. A compositionally biased stretch (low complexity) spans 399–411; it reads SPSNSGLSSPSDL. Residues 420 to 432 show a composition bias toward basic residues; the sequence is RKRKRKSSRGFRQ.

In Rattus norvegicus (Rat), this protein is EF-hand calcium-binding domain-containing protein 3 (Efcab3).